Consider the following 436-residue polypeptide: 3-ketoacyl-CoA thiolase (436 aa).

The active-site Acyl-thioester intermediate is the C99. Active-site proton acceptor residues include H392 and C422.

Belongs to the thiolase-like superfamily. Thiolase family. In terms of assembly, heterotetramer of two alpha chains (FadJ) and two beta chains (FadI).

It is found in the cytoplasm. The enzyme catalyses an acyl-CoA + acetyl-CoA = a 3-oxoacyl-CoA + CoA. It functions in the pathway lipid metabolism; fatty acid beta-oxidation. Catalyzes the final step of fatty acid oxidation in which acetyl-CoA is released and the CoA ester of a fatty acid two carbons shorter is formed. This is 3-ketoacyl-CoA thiolase from Salmonella heidelberg (strain SL476).